The chain runs to 371 residues: Cytochrome b (371 aa).

A run of 4 helical transmembrane segments spans residues 25-45 (FGSM…FLAV), 69-90 (WMMQ…YIHI), 105-125 (WMSG…GYVL), and 170-190 (FFAL…LHII). The heme b site is built by His-75 and His-89. Heme b is bound by residues His-174 and His-188. His-193 contributes to the a ubiquinone binding site. Helical transmembrane passes span 218–238 (HKDL…VSFF), 280–300 (LGGA…PFTH), 312–332 (LSQL…WAAT), and 339–358 (FIAI…LSIP).

This sequence belongs to the cytochrome b family. As to quaternary structure, the cytochrome bc1 complex contains 3 respiratory subunits (MT-CYB, CYC1 and UQCRFS1), 2 core proteins (UQCRC1 and UQCRC2) and probably 6 low-molecular weight proteins. It depends on heme b as a cofactor.

Its subcellular location is the mitochondrion inner membrane. Component of the ubiquinol-cytochrome c reductase complex (complex III or cytochrome b-c1 complex) that is part of the mitochondrial respiratory chain. The b-c1 complex mediates electron transfer from ubiquinol to cytochrome c. Contributes to the generation of a proton gradient across the mitochondrial membrane that is then used for ATP synthesis. In Liasis olivaceus (Olive python), this protein is Cytochrome b (MT-CYB).